A 3392-amino-acid chain; its full sequence is Genome polyprotein (3392 aa).

Over 1–101 (MNNQRKKTGR…LNIMNRRKRS (101 aa)) the chain is Cytoplasmic. Residues 33 to 74 (FSKGLLSGQGPMKLVMAFIAFLRFLAIPPTAGILARWSSFKK) are hydrophobic; homodimerization of capsid protein C. Positions 101–114 (SVTMLLMLLPTALA) are cleaved as a propeptide — ER anchor for the protein C, removed in mature form by serine protease NS3. Residues 102–119 (VTMLLMLLPTALAFHLTT) form a helical membrane-spanning segment. Topologically, residues 120-242 (RGGEPHMIVS…QIQKVETWAL (123 aa)) are extracellular. An N-linked (GlcNAc...) asparagine; by host glycan is attached at N183. The helical transmembrane segment at 243–260 (RHPGFTVIALFLAHAIGT) threads the bilayer. Residue S261 is a topological domain, cytoplasmic. The chain crosses the membrane as a helical span at residues 262–280 (ITQKGIIFILLMLVTPSMA). Residues 281–725 (MRCVGIGNRD…VHQVFGTAYG (445 aa)) lie on the Extracellular side of the membrane. 4 disulfide bridges follow: C283-C310, C340-C401, C354-C385, and C372-C396. The N-linked (GlcNAc...) asparagine; by host glycan is linked to N347. N-linked (GlcNAc...) asparagine; by host glycosylation is present at N433. Disulfide bonds link C465/C565 and C582/C613. An intramembrane region (helical) is located at residues 726 to 746 (VLFSGVSWTMKIGIGILLTWL). At 747–752 (GLNSRS) the chain is on the extracellular side. The segment at residues 753–775 (TSLSMTCIAVGMVTLYLGVMVQA) is an intramembrane region (helical). Residues 776-1125 (DSGCVINWKG…KEENLVRSMV (350 aa)) are Extracellular-facing. 6 cysteine pairs are disulfide-bonded: C779-C790, C830-C918, C954-C998, C1055-C1104, C1066-C1088, and C1087-C1091. Residues N905 and N982 are each glycosylated (N-linked (GlcNAc...) asparagine; by host). The helical transmembrane segment at 1126 to 1146 (SAGSGEVDSFSLGILCVSIMI) threads the bilayer. The Cytoplasmic portion of the chain corresponds to 1147–1157 (EEVMRSRWSRK). A helical transmembrane segment spans residues 1158 to 1178 (MLMTGTLAVFLLLIMGQLTWN). At 1179–1199 (DLIRLCIMVGANASDKMGMGT) the chain is on the lumenal side. Residue N1190 is glycosylated (N-linked (GlcNAc...) asparagine; by host). A helical transmembrane segment spans residues 1200–1220 (TYLALMATFKMRPMFAVGLLF). Topologically, residues 1221-1289 (RRLTSREVLL…TFIKTTLSLD (69 aa)) are cytoplasmic. A helical membrane pass occupies residues 1290 to 1310 (YAWKTTAMVLSIVSLFPLCLS). Topologically, residues 1311–1315 (TTSQK) are lumenal. Residues 1316–1336 (TTWLPVLLGSFGCKPLTMFLI) form a helical membrane-spanning segment. At 1337–1346 (TENEIWGRKS) the chain is on the cytoplasmic side. The helical transmembrane segment at 1347–1367 (WPLNEGIMAIGIVSILLSSLL) threads the bilayer. At 1368–1370 (KND) the chain is on the lumenal side. A helical membrane pass occupies residues 1371–1391 (VPLAGPLIAGGMLIACYVISG). At 1392–1447 (SSADLSLEKAAEVSWEEEAEHSGTSHNILVEVQDDGTMKIKDEERDDTLTILLKAT) the chain is on the cytoplasmic side. The interval 1398–1437 (LEKAAEVSWEEEAEHSGTSHNILVEVQDDGTMKIKDEERD) is interacts with and activates NS3 protease. Residues 1448–1468 (LLAVSGVYPMSIPATLFVWYF) constitute an intramembrane region (helical). At 1469–2148 (WQKKKQRSGV…MEELPDTIET (680 aa)) the chain is on the cytoplasmic side. The Peptidase S7 domain occupies 1476 to 1653 (SGVLWDTPSP…KASQEGPLPE (178 aa)). Residues H1526, D1550, and S1610 each act as charge relay system; for serine protease NS3 activity in the active site. Residues 1656–1812 (DEVFKKRNLT…QSNAVIQDEE (157 aa)) enclose the Helicase ATP-binding domain. ATP is bound at residue 1669–1676 (LHPGSGKT). Positions 1760 to 1763 (DEAH) match the DEAH box motif. Residues 1822–1989 (SGYDWITDFP…IIPALFEPER (168 aa)) enclose the Helicase C-terminal domain. The residue at position 1864 (K1864) is an N6-acetyllysine; by host. A helical membrane pass occupies residues 2149 to 2169 (LMLLALIAVLTGGVTLFFLSG). Topologically, residues 2170–2171 (KG) are lumenal. Positions 2172-2192 (LGKTSIGLLCVTASSALLWMA) form an intramembrane region, helical. S2193 is a topological domain (lumenal). A helical transmembrane segment spans residues 2194–2214 (VEPHWIAASIILEFFLMVLLI). Topologically, residues 2215–2229 (PEPDRQRTPQDNQLA) are cytoplasmic. Residues 2230-2250 (YVVIGLLFMILTVAANEMGLL) form a helical membrane-spanning segment. Residues 2251 to 2276 (ETTKKDLGIGHVAAENHQHATILDVD) lie on the Lumenal side of the membrane. Residues 2277–2297 (LHPASAWTLYAVATTVITPMM) constitute an intramembrane region (helical). The Lumenal segment spans residues 2298 to 2349 (RHTIENTTANISLTAIANQAAILMGLDKGWPISKMDLGVPLLALGCYSQVNP). 2 N-linked (GlcNAc...) asparagine; by host glycosylation sites follow: N2303 and N2307. A helical transmembrane segment spans residues 2350-2370 (LTLTAAVLMLVAHYAIIGPGL). Residues 2371-2415 (QAKATREAQKRTAAGIMKNPTVDGIVAIDLDPVVYDAKFEKQLGQ) lie on the Cytoplasmic side of the membrane. The helical transmembrane segment at 2416-2436 (IMLLILCTSQILLMRTTWALC) threads the bilayer. Over 2437-2461 (ESITLATGPLTTLWEGSPGKFWNTT) the chain is Lumenal. An N-linked (GlcNAc...) asparagine; by host glycan is attached at N2459. The helical transmembrane segment at 2462-2482 (IAVSMANIFRGSYLAGAGLAF) threads the bilayer. The Cytoplasmic portion of the chain corresponds to 2483–3392 (SLMKSLGGGR…NESDPEGALW (910 aa)). The 262-residue stretch at 2495–2756 (TGAQGETLGE…DVDLGAGTRH (262 aa)) folds into the mRNA cap 0-1 NS5-type MT domain. Positions 2549, 2579, 2580, 2597, 2598, 2624, 2625, 2640, and 2711 each coordinate S-adenosyl-L-methionine. Residues 3021-3170 (NMYADDTAGW…PIDDRFATAL (150 aa)) enclose the RdRp catalytic domain.

This sequence in the N-terminal section; belongs to the class I-like SAM-binding methyltransferase superfamily. mRNA cap 0-1 NS5-type methyltransferase family. In terms of assembly, capsid protein C: Homodimer. Interacts (via N-terminus) with host EXOC1 (via C-terminus); this interaction results in EXOC1 degradation through the proteasome degradation pathway. Forms heterodimers with envelope protein E in the endoplasmic reticulum and Golgi. As to quaternary structure, homodimer; in the endoplasmic reticulum and Golgi. Interacts with protein prM. Interacts with non-structural protein 1. In terms of assembly, homodimer; Homohexamer when secreted. Interacts with envelope protein E. Interacts (via N-terminus) with serine protease NS3. As to quaternary structure, forms a heterodimer with serine protease NS3. May form homooligomers. In terms of assembly, forms a heterodimer with NS2B. Interacts with NS4B. Interacts with unphosphorylated RNA-directed RNA polymerase NS5; this interaction stimulates RNA-directed RNA polymerase NS5 guanylyltransferase activity. Interacts with host SHFL. Interacts with host MAVS; this interaction inhibits the synthesis of IFN-beta. Interacts with host SHFL. Interacts with host AUP1; the interaction occurs in the presence of Dengue virus NS4B and induces lipophagy which facilitates production of virus progeny particles. As to quaternary structure, interacts with serine protease NS3. In terms of assembly, homodimer. Interacts with host STAT2; this interaction inhibits the phosphorylation of the latter, and, when all viral proteins are present (polyprotein), targets STAT2 for degradation. Interacts with serine protease NS3. Post-translationally, specific enzymatic cleavages in vivo yield mature proteins. Cleavages in the lumen of endoplasmic reticulum are performed by host signal peptidase, wereas cleavages in the cytoplasmic side are performed by the Serine protease NS3. Signal cleavage at the 2K-4B site requires a prior NS3 protease-mediated cleavage at the 4A-2K site. In terms of processing, a C-terminally truncated form of non-structural protein 2A, results from partial cleavage by NS3. Cleaved in post-Golgi vesicles by a host furin, releasing the mature small envelope protein M, and peptide pr. This cleavage is incomplete as up to 30% of viral particles still carry uncleaved prM. Post-translationally, the excreted form is glycosylated and this is required for efficient secretion of the protein from infected cells. In terms of processing, phosphorylated on serines residues. This phosphorylation may trigger NS5 nuclear localization. N-glycosylated. Post-translationally, acetylated by host KAT5. Acetylation modulates NS3 RNA-binding and unwinding activities and plays an important positive role for viral replication.

It is found in the virion. Its subcellular location is the host nucleus. It localises to the secreted. The protein localises to the virion membrane. The protein resides in the host endoplasmic reticulum membrane. It is found in the host mitochondrion. The catalysed reaction is Selective hydrolysis of -Xaa-Xaa-|-Yaa- bonds in which each of the Xaa can be either Arg or Lys and Yaa can be either Ser or Ala.. The enzyme catalyses RNA(n) + a ribonucleoside 5'-triphosphate = RNA(n+1) + diphosphate. It catalyses the reaction a ribonucleoside 5'-triphosphate + H2O = a ribonucleoside 5'-diphosphate + phosphate + H(+). It carries out the reaction ATP + H2O = ADP + phosphate + H(+). The catalysed reaction is a 5'-end (5'-triphosphoguanosine)-ribonucleoside in mRNA + S-adenosyl-L-methionine = a 5'-end (N(7)-methyl 5'-triphosphoguanosine)-ribonucleoside in mRNA + S-adenosyl-L-homocysteine. The enzyme catalyses a 5'-end (N(7)-methyl 5'-triphosphoguanosine)-ribonucleoside in mRNA + S-adenosyl-L-methionine = a 5'-end (N(7)-methyl 5'-triphosphoguanosine)-(2'-O-methyl-ribonucleoside) in mRNA + S-adenosyl-L-homocysteine + H(+). Plays a role in virus budding by binding to membrane and gathering the viral RNA into a nucleocapsid that forms the core of a mature virus particle. During virus entry, may induce genome penetration in host cytoplasm after hemifusion induced by surface proteins. Can migrate tot cell nucleus where it modulates host functions. In terms of biological role, prevents premature fusion activity of envelope proteins in trans Golgi by binding to envelope protein E at pH6.0. After virion release in extracellular space gets dissociated from E dimers. Functionally, acts as a chaperone for envelope protein E during intracellular virion assembly by masking and inactivating envelope protein E fusion peptide. prM is the only viral peptide matured by host furin in the trans-Golgi network. Presumably to avoid catastrophic activation of the viral fusion activity in acidic GolGi compartment prior to virion release. prM-E cleavage is ineficient, and many virions are only partially matured. These uncleaved prM would play a role in immune evasion. Its function is as follows. May play a role in virus budding. Exerts cytotoxic effects by activating a mitochondrial apoptotic pathway through M extodomain. May display a viroporin activity. Binds to host cell surface receptor and mediates fusion between viral and cellular membranes. Envelope protein is synthesized in the endoplasmic reticulum in the form of heterodimer with protein prM. They play a role in virion budding in the ER, and the newly formed immature particle is covered with 60 spikes composed of heterodimer between precursor prM and envelope protein E. The virion is transported to the Golgi apparatus where the low pH causes dissociation of PrM-E heterodimers and formation of E homodimers. prM-E cleavage is ineficient, and many virions are only partially matured. These uncleaved prM would play a role in immune evasion. In terms of biological role, involved in immune evasion, pathogenesis and viral replication. Once cleaved off the polyprotein, is targeted to three destinations: the viral replication cycle, the plasma membrane and the extracellular compartment. May play a role in viral genome replication. Assist membrane bending and envelopment of genomic RNA at the endoplasmic reticulum. Excreted as a hexameric lipoparticle that plays a role against host immune response. Functionally, component of the viral RNA replication complex that functions in virion assembly and antagonizes the host immune response. Its function is as follows. Required cofactor for the serine protease function of NS3. May have membrane-destabilizing activity and form viroporins. Displays three enzymatic activities: serine protease, NTPase and RNA helicase. NS3 serine protease, in association with NS2B, performs its autocleavage and cleaves the polyprotein at dibasic sites in the cytoplasm: C-prM, NS2A-NS2B, NS2B-NS3, NS3-NS4A, NS4A-2K and NS4B-NS5. NS3 RNA helicase binds RNA and unwinds dsRNA in the 3' to 5' direction. In terms of biological role, regulates the ATPase activity of the NS3 helicase activity. NS4A allows NS3 helicase to conserve energy during unwinding. Plays a role in the inhibition of the host innate immune response. Interacts with host MAVS and thereby prevents the interaction between RIGI and MAVS. In turn, IFN-beta production is impaired. Interacts with host AUP1 which mediates induction of lipophagy in host cells and facilitates production of virus progeny particles. Functionally, functions as a signal peptide for NS4B and is required for the interferon antagonism activity of the latter. Its function is as follows. Inhibits interferon (IFN)-induced host STAT1 phosphorylation and nuclear translocation, thereby preventing the establishment of cellular antiviral state by blocking the IFN-alpha/beta pathway. Replicates the viral (+) and (-) genome, and performs the capping of genomes in the cytoplasm. NS5 methylates viral RNA cap at guanine N-7 and ribose 2'-O positions. Besides its role in RNA genome replication, also prevents the establishment of cellular antiviral state by blocking the interferon-alpha/beta (IFN-alpha/beta) signaling pathway. Inhibits host TYK2 and STAT2 phosphorylation, thereby preventing activation of JAK-STAT signaling pathway. The protein is Genome polyprotein of Dengue virus type 1 (strain Brazil/97-11/1997) (DENV-1).